The following is a 203-amino-acid chain: Akirin-2 (203 aa).

2 positions are modified to phosphoserine: Ser-18 and Ser-21. The short motif at 22 to 27 is the Nuclear localization signal element; it reads PKRRRC. Residue Ser-57 is modified to Phosphoserine. An SYVS motif motif is present at residues 200 to 203; that stretch reads SYVS.

This sequence belongs to the akirin family. Homodimer. Interacts with IPO9; the interaction is direct. Associates with 20S and 26S proteasomes. Interacts with SMARCD1; promoting SWI/SNF complex recruitment. Interacts with NFKBIZ. Interacts with YWHAB. Post-translationally, polyubiquitinated. Polyubiquitination is dependent of UBR5 that extends pre-ubiquitinated AKIRIN2. As to expression, widely expressed. Most abundant in the lung, followed by the skeletal muscle, heart, liver, fat, thymus, lymph node, small intestine, kidney and spleen. In skeletal muscle, expressed at higher level in fast extensor digitorum longus (EDL) and longissimus lumborum (LL) muscles than in slow soleus (SOL) muscles.

The protein localises to the nucleus. It is found in the cytoplasm. The protein resides in the membrane. Its function is as follows. Molecular adapter that acts as a bridge between a variety of multiprotein complexes, and which is involved in embryonic development, immunity, myogenesis and brain development. Plays a key role in nuclear protein degradation by promoting import of proteasomes into the nucleus: directly binds to fully assembled 20S proteasomes at one end and to nuclear import receptor IPO9 at the other end, bridging them together and mediating the import of pre-assembled proteasome complexes through the nuclear pore. Involved in innate immunity by regulating the production of interleukin-6 (IL6) downstream of Toll-like receptor (TLR): acts by bridging the NF-kappa-B inhibitor NFKBIZ and the SWI/SNF complex, leading to promote induction of IL6. Also involved in adaptive immunity by promoting B-cell activation. Involved in brain development: required for the survival and proliferation of cerebral cortical progenitor cells. Involved in myogenesis: required for skeletal muscle formation and skeletal development, possibly by regulating expression of muscle differentiation factors. This is Akirin-2 from Sus scrofa (Pig).